The sequence spans 307 residues: Ribonuclease Z (307 aa).

Zn(2+) is bound by residues H63, H65, D67, H68, H141, D212, and H270. Catalysis depends on D67, which acts as the Proton acceptor.

The protein belongs to the RNase Z family. Homodimer. Requires Zn(2+) as cofactor.

The catalysed reaction is Endonucleolytic cleavage of RNA, removing extra 3' nucleotides from tRNA precursor, generating 3' termini of tRNAs. A 3'-hydroxy group is left at the tRNA terminus and a 5'-phosphoryl group is left at the trailer molecule.. Zinc phosphodiesterase, which displays some tRNA 3'-processing endonuclease activity. Probably involved in tRNA maturation, by removing a 3'-trailer from precursor tRNA. The chain is Ribonuclease Z from Bacillus cereus (strain ATCC 10987 / NRS 248).